The primary structure comprises 228 residues: MIGIIGAMEEEVTILKRKLNDMNEINIAHVKFYVGKLNHKEVVLTQSGIGKVNASISTTLLIEKFNPEVVINTGSAGALDQTLSIGDILVSNHVLYHDANATAFGYEYGQIPQMPKTYTTDPTLLKKTMHVLEQQQLNGKVGMIVSGDSFIGSSEQRQKIKQQFPEAMAVEMEATAIAQTCYQFKVPFIVTRAVSDLANGKADISFEEFLDKAALSSSETVSLLVESL.

The active-site Proton acceptor is E11. Residues G77, I151, and 172–173 each bind substrate; that span reads ME. Residue D196 is the Proton donor of the active site.

It belongs to the PNP/UDP phosphorylase family. MtnN subfamily.

It carries out the reaction S-adenosyl-L-homocysteine + H2O = S-(5-deoxy-D-ribos-5-yl)-L-homocysteine + adenine. The enzyme catalyses S-methyl-5'-thioadenosine + H2O = 5-(methylsulfanyl)-D-ribose + adenine. It catalyses the reaction 5'-deoxyadenosine + H2O = 5-deoxy-D-ribose + adenine. Its pathway is amino-acid biosynthesis; L-methionine biosynthesis via salvage pathway; S-methyl-5-thio-alpha-D-ribose 1-phosphate from S-methyl-5'-thioadenosine (hydrolase route): step 1/2. Functionally, catalyzes the irreversible cleavage of the glycosidic bond in both 5'-methylthioadenosine (MTA) and S-adenosylhomocysteine (SAH/AdoHcy) to adenine and the corresponding thioribose, 5'-methylthioribose and S-ribosylhomocysteine, respectively. Also cleaves 5'-deoxyadenosine, a toxic by-product of radical S-adenosylmethionine (SAM) enzymes, into 5-deoxyribose and adenine. This is 5'-methylthioadenosine/S-adenosylhomocysteine nucleosidase from Staphylococcus epidermidis (strain ATCC 12228 / FDA PCI 1200).